The sequence spans 264 residues: 3-methyl-2-oxobutanoate hydroxymethyltransferase (264 aa).

Residues D45 and D84 each coordinate Mg(2+). Residues 45–46 (DS), D84, and K112 contribute to the 3-methyl-2-oxobutanoate site. Residue E114 coordinates Mg(2+). The Proton acceptor role is filled by E181.

This sequence belongs to the PanB family. As to quaternary structure, homodecamer; pentamer of dimers. Requires Mg(2+) as cofactor.

It localises to the cytoplasm. The enzyme catalyses 3-methyl-2-oxobutanoate + (6R)-5,10-methylene-5,6,7,8-tetrahydrofolate + H2O = 2-dehydropantoate + (6S)-5,6,7,8-tetrahydrofolate. The protein operates within cofactor biosynthesis; (R)-pantothenate biosynthesis; (R)-pantoate from 3-methyl-2-oxobutanoate: step 1/2. Catalyzes the reversible reaction in which hydroxymethyl group from 5,10-methylenetetrahydrofolate is transferred onto alpha-ketoisovalerate to form ketopantoate. The sequence is that of 3-methyl-2-oxobutanoate hydroxymethyltransferase from Shewanella sp. (strain MR-4).